The chain runs to 254 residues: Dihydroorotate dehydrogenase B (NAD(+)), electron transfer subunit (254 aa).

The region spanning 1 to 99 (MLQTEMKVIQ…LGPLGKGFDI (99 aa)) is the FAD-binding FR-type domain. Residues 50–53 (RPIS), 67–69 (LYR), and 74–75 (GT) each bind FAD. [2Fe-2S] cluster-binding residues include C218, C223, C226, and C241.

This sequence belongs to the PyrK family. As to quaternary structure, heterotetramer of 2 PyrK and 2 PyrD type B subunits. [2Fe-2S] cluster serves as cofactor. It depends on FAD as a cofactor.

It functions in the pathway pyrimidine metabolism; UMP biosynthesis via de novo pathway; orotate from (S)-dihydroorotate (NAD(+) route): step 1/1. Responsible for channeling the electrons from the oxidation of dihydroorotate from the FMN redox center in the PyrD type B subunit to the ultimate electron acceptor NAD(+). In Listeria welshimeri serovar 6b (strain ATCC 35897 / DSM 20650 / CCUG 15529 / CIP 8149 / NCTC 11857 / SLCC 5334 / V8), this protein is Dihydroorotate dehydrogenase B (NAD(+)), electron transfer subunit.